A 1550-amino-acid chain; its full sequence is Protein TIME FOR COFFEE (1550 aa).

Disordered regions lie at residues methionine 1–proline 191, valine 207–valine 304, threonine 325–glycine 505, glutamine 708–arginine 736, arginine 779–proline 805, phenylalanine 859–valine 1023, alanine 1086–alanine 1130, alanine 1163–proline 1196, alanine 1213–alanine 1296, and asparagine 1321–glycine 1435. Over residues glutamate 43–asparagine 80 the composition is skewed to basic and acidic residues. The span at aspartate 100–aspartate 118 shows a compositional bias: acidic residues. The span at serine 134–asparagine 151 shows a compositional bias: low complexity. Over residues leucine 157 to lysine 171 the composition is skewed to basic residues. Residues arginine 241–asparagine 250 are compositionally biased toward polar residues. Low complexity predominate over residues lysine 292–proline 301. Over residues arginine 348 to leucine 366 the composition is skewed to polar residues. The span at alanine 367 to alanine 379 shows a compositional bias: low complexity. Residues serine 409 to leucine 432 show a composition bias toward polar residues. Composition is skewed to basic and acidic residues over residues aspartate 447 to isoleucine 461 and serine 473 to isoleucine 490. 3 stretches are compositionally biased toward polar residues: residues glycine 713–arginine 736, serine 783–alanine 803, and leucine 884–leucine 992. Over residues serine 1112–glycine 1126 the composition is skewed to gly residues. Polar residues predominate over residues leucine 1164–threonine 1173. A compositionally biased stretch (low complexity) spans serine 1174–glutamine 1195. Residues asparagine 1234–proline 1253 are compositionally biased toward polar residues. The segment covering glutamine 1254–serine 1273 has biased composition (low complexity). Polar residues-rich tracts occupy residues proline 1274–alanine 1296, asparagine 1321–alanine 1342, and serine 1351–asparagine 1360. Residues alanine 1361–serine 1382 are compositionally biased toward low complexity. Polar residues-rich tracts occupy residues threonine 1383 to proline 1397 and glycine 1405 to threonine 1419. The span at serine 1420–glycine 1435 shows a compositional bias: low complexity.

As to quaternary structure, interacts with MYC2.

It localises to the nucleus. In terms of biological role, regulator of normal clock function. Acts in the mid to late night. Contributes to the amplitude of circadian clocks. May act on the transcriptional induction of LATE ELONGATED HYPOCOTYL (LHY). Inhibits MYC2 protein accumulation, acting as a negative factor in the JA-signaling pathway. This chain is Protein TIME FOR COFFEE (TIC), found in Arabidopsis thaliana (Mouse-ear cress).